Reading from the N-terminus, the 46-residue chain is Photosystem II reaction center protein K (46 aa).

The propeptide occupies 1–9; sequence MLTLLNTFA. The helical transmembrane segment at 25 to 45 threads the bilayer; the sequence is LPLIPLFFFLLVFVWQAAVGF.

This sequence belongs to the PsbK family. In terms of assembly, PSII is composed of 1 copy each of membrane proteins PsbA, PsbB, PsbC, PsbD, PsbE, PsbF, PsbH, PsbI, PsbJ, PsbK, PsbL, PsbM, PsbT, PsbX, PsbY, Psb30/Ycf12, peripheral proteins PsbO, CyanoQ (PsbQ), PsbU, PsbV and a large number of cofactors. It forms dimeric complexes.

It localises to the cellular thylakoid membrane. In terms of biological role, one of the components of the core complex of photosystem II (PSII). PSII is a light-driven water:plastoquinone oxidoreductase that uses light energy to abstract electrons from H(2)O, generating O(2) and a proton gradient subsequently used for ATP formation. It consists of a core antenna complex that captures photons, and an electron transfer chain that converts photonic excitation into a charge separation. The polypeptide is Photosystem II reaction center protein K (Prochlorococcus marinus (strain MIT 9515)).